Reading from the N-terminus, the 55-residue chain is Large ribosomal subunit protein bL33 (55 aa).

The protein belongs to the bacterial ribosomal protein bL33 family.

The sequence is that of Large ribosomal subunit protein bL33 from Xanthomonas oryzae pv. oryzae (strain PXO99A).